A 148-amino-acid chain; its full sequence is Deoxyuridine 5'-triphosphate nucleotidohydrolase (148 aa).

Substrate contacts are provided by residues 68–70, Asn81, 85–87, and Lys95; these read RSG and TID.

Belongs to the dUTPase family. The cofactor is Mg(2+).

The enzyme catalyses dUTP + H2O = dUMP + diphosphate + H(+). It functions in the pathway pyrimidine metabolism; dUMP biosynthesis; dUMP from dCTP (dUTP route): step 2/2. In terms of biological role, this enzyme is involved in nucleotide metabolism: it produces dUMP, the immediate precursor of thymidine nucleotides and it decreases the intracellular concentration of dUTP so that uracil cannot be incorporated into DNA. This is Deoxyuridine 5'-triphosphate nucleotidohydrolase from Rickettsia akari (strain Hartford).